We begin with the raw amino-acid sequence, 306 residues long: Methionyl-tRNA formyltransferase (306 aa).

110–113 (SLLP) is a binding site for (6S)-5,6,7,8-tetrahydrofolate.

The protein belongs to the Fmt family.

The catalysed reaction is L-methionyl-tRNA(fMet) + (6R)-10-formyltetrahydrofolate = N-formyl-L-methionyl-tRNA(fMet) + (6S)-5,6,7,8-tetrahydrofolate + H(+). In terms of biological role, attaches a formyl group to the free amino group of methionyl-tRNA(fMet). The formyl group appears to play a dual role in the initiator identity of N-formylmethionyl-tRNA by promoting its recognition by IF2 and preventing the misappropriation of this tRNA by the elongation apparatus. The polypeptide is Methionyl-tRNA formyltransferase (Brucella abortus (strain S19)).